The sequence spans 179 residues: ATP synthase subunit delta (179 aa).

The protein belongs to the ATPase delta chain family. In terms of assembly, F-type ATPases have 2 components, F(1) - the catalytic core - and F(0) - the membrane proton channel. F(1) has five subunits: alpha(3), beta(3), gamma(1), delta(1), epsilon(1). F(0) has three main subunits: a(1), b(2) and c(10-14). The alpha and beta chains form an alternating ring which encloses part of the gamma chain. F(1) is attached to F(0) by a central stalk formed by the gamma and epsilon chains, while a peripheral stalk is formed by the delta and b chains.

The protein localises to the cell inner membrane. Functionally, f(1)F(0) ATP synthase produces ATP from ADP in the presence of a proton or sodium gradient. F-type ATPases consist of two structural domains, F(1) containing the extramembraneous catalytic core and F(0) containing the membrane proton channel, linked together by a central stalk and a peripheral stalk. During catalysis, ATP synthesis in the catalytic domain of F(1) is coupled via a rotary mechanism of the central stalk subunits to proton translocation. Its function is as follows. This protein is part of the stalk that links CF(0) to CF(1). It either transmits conformational changes from CF(0) to CF(1) or is implicated in proton conduction. In Burkholderia mallei (strain SAVP1), this protein is ATP synthase subunit delta.